The chain runs to 317 residues: Transaldolase (317 aa).

Lys-126 (schiff-base intermediate with substrate) is an active-site residue.

This sequence belongs to the transaldolase family. Type 1 subfamily. Homodimer.

The protein localises to the cytoplasm. The catalysed reaction is D-sedoheptulose 7-phosphate + D-glyceraldehyde 3-phosphate = D-erythrose 4-phosphate + beta-D-fructose 6-phosphate. The protein operates within carbohydrate degradation; pentose phosphate pathway; D-glyceraldehyde 3-phosphate and beta-D-fructose 6-phosphate from D-ribose 5-phosphate and D-xylulose 5-phosphate (non-oxidative stage): step 2/3. Functionally, transaldolase is important for the balance of metabolites in the pentose-phosphate pathway. This chain is Transaldolase, found in Burkholderia mallei (strain SAVP1).